The sequence spans 343 residues: Ion-translocating oxidoreductase complex subunit D (343 aa).

4 helical membrane-spanning segments follow: residues 24–44 (VLLA…AGTL), 45–65 (YNLA…LAAR), 69–91 (LAFF…ALPP), and 124–144 (AMLG…SWPA). Residue Thr-171 is modified to FMN phosphoryl threonine. 5 helical membrane passes run 197-217 (FGGA…LYLL), 221-241 (LITW…SLLF), 251-271 (GSPL…FIVT), 284-304 (LVFG…GGYP), and 305-325 (DAVA…DYYT).

This sequence belongs to the NqrB/RnfD family. The complex is composed of six subunits: RnfA, RnfB, RnfC, RnfD, RnfE and RnfG. It depends on FMN as a cofactor.

It is found in the cell inner membrane. Functionally, part of a membrane-bound complex that couples electron transfer with translocation of ions across the membrane. The protein is Ion-translocating oxidoreductase complex subunit D of Ectopseudomonas mendocina (strain ymp) (Pseudomonas mendocina).